The sequence spans 197 residues: Small ribosomal subunit protein uS5 (197 aa).

Residues 1-17 show a composition bias toward basic and acidic residues; that stretch reads MAERENRGRGRGRNREE. Disordered stretches follow at residues 1-22 and 158-197; these read MAER…TPEF and NESS…SEEA. An S5 DRBM domain is found at 22 to 85; that stretch reads FADRLVAINR…EQAKRQLIRV (64 aa). Positions 172–186 are enriched in basic and acidic residues; the sequence is KVADILPKRDDHPQI.

This sequence belongs to the universal ribosomal protein uS5 family. As to quaternary structure, part of the 30S ribosomal subunit. Contacts proteins S4 and S8.

Functionally, with S4 and S12 plays an important role in translational accuracy. In terms of biological role, located at the back of the 30S subunit body where it stabilizes the conformation of the head with respect to the body. The protein is Small ribosomal subunit protein uS5 of Jannaschia sp. (strain CCS1).